A 501-amino-acid chain; its full sequence is Vitamin D 25-hydroxylase (501 aa).

The N-terminal stretch at 1-26 (MWKLWRAEEGAAALGGALFLLLFALG) is a signal peptide. Residue Ala250 coordinates substrate. Cys448 serves as a coordination point for heme.

Belongs to the cytochrome P450 family. In terms of assembly, homodimer. The cofactor is heme.

It is found in the endoplasmic reticulum membrane. The protein resides in the microsome membrane. It carries out the reaction calciol + reduced [NADPH--hemoprotein reductase] + O2 = calcidiol + oxidized [NADPH--hemoprotein reductase] + H2O + H(+). It catalyses the reaction vitamin D2 + reduced [NADPH--hemoprotein reductase] + O2 = 25-hydroxyvitamin D2 + oxidized [NADPH--hemoprotein reductase] + H2O + H(+). The catalysed reaction is 1alpha-hydroxyvitamin D2 + reduced [NADPH--hemoprotein reductase] + O2 = 1alpha,25-dihydroxyvitamin D2 + oxidized [NADPH--hemoprotein reductase] + H2O + H(+). The enzyme catalyses alfacalcidol + reduced [NADPH--hemoprotein reductase] + O2 = calcitriol + oxidized [NADPH--hemoprotein reductase] + H2O + H(+). Its pathway is hormone biosynthesis; vitamin D biosynthesis. Its function is as follows. A cytochrome P450 monooxygenase involved in activation of vitamin D precursors. Catalyzes hydroxylation at C-25 of both forms of vitamin D, vitamin D(2) and D(3) (calciol). Can metabolize vitamin D analogs/prodrugs 1alpha-hydroxyvitamin D(2) (doxercalciferol) and 1alpha-hydroxyvitamin D(3) (alfacalcidol) forming 25-hydroxy derivatives. Mechanistically, uses molecular oxygen inserting one oxygen atom into a substrate, and reducing the second into a water molecule, with two electrons provided by NADPH via cytochrome P450 reductase (CPR; NADPH-ferrihemoprotein reductase). This is Vitamin D 25-hydroxylase (CYP2R1) from Homo sapiens (Human).